A 37-amino-acid chain; its full sequence is Large ribosomal subunit protein bL36 (37 aa).

This sequence belongs to the bacterial ribosomal protein bL36 family.

This Shewanella baltica (strain OS223) protein is Large ribosomal subunit protein bL36.